The sequence spans 356 residues: Arginine kinase (356 aa).

Residue Ala2 is modified to N-acetylalanine. A Phosphagen kinase N-terminal domain is found at 9 to 91; sequence KLEEGFKKLE…FDPIIEDYHK (83 aa). L-arginine is bound at residue 64–68; it reads GVGIY. In terms of domain architecture, Phosphagen kinase C-terminal spans 119 to 356; that stretch reads FVISTRVRCG…LELIKIEKEM (238 aa). ATP-binding positions include 122–126 and His185; that span reads STRVR. Glu225 is a binding site for L-arginine. Arg229 serves as a coordination point for ATP. Cys271 is an L-arginine binding site. Residues 280-284 and 309-314 each bind ATP; these read RASVH and RGTRGE. Glu314 lines the L-arginine pocket.

It belongs to the ATP:guanido phosphotransferase family.

It catalyses the reaction L-arginine + ATP = N(omega)-phospho-L-arginine + ADP + H(+). This is Arginine kinase from Homarus gammarus (European lobster).